The chain runs to 329 residues: Ribosomal RNA small subunit methyltransferase C (329 aa).

The protein belongs to the methyltransferase superfamily. RsmC family. Monomer.

It localises to the cytoplasm. The catalysed reaction is guanosine(1207) in 16S rRNA + S-adenosyl-L-methionine = N(2)-methylguanosine(1207) in 16S rRNA + S-adenosyl-L-homocysteine + H(+). Specifically methylates the guanine in position 1207 of 16S rRNA in the 30S particle. The polypeptide is Ribosomal RNA small subunit methyltransferase C (Actinobacillus pleuropneumoniae serotype 5b (strain L20)).